A 254-amino-acid chain; its full sequence is 3-deoxy-manno-octulosonate cytidylyltransferase (254 aa).

It belongs to the KdsB family.

It is found in the cytoplasm. The catalysed reaction is 3-deoxy-alpha-D-manno-oct-2-ulosonate + CTP = CMP-3-deoxy-beta-D-manno-octulosonate + diphosphate. The protein operates within nucleotide-sugar biosynthesis; CMP-3-deoxy-D-manno-octulosonate biosynthesis; CMP-3-deoxy-D-manno-octulosonate from 3-deoxy-D-manno-octulosonate and CTP: step 1/1. Activates KDO (a required 8-carbon sugar) for incorporation into bacterial lipopolysaccharide in Gram-negative bacteria. This is 3-deoxy-manno-octulosonate cytidylyltransferase from Lawsonia intracellularis (strain PHE/MN1-00).